Consider the following 433-residue polypeptide: Monodehydroascorbate reductase (433 aa).

Residues 13 to 16 (GGVS), Glu-40, Arg-47, Lys-52, Ile-95, and 146 to 147 (RE) contribute to the FAD site. Residues 171–177 (GGYIGLE), Glu-195, Arg-201, and Gly-260 each bind NAD(+). An NADP(+)-binding site is contributed by 173 to 177 (YIGLE). The NADP(+) site is built by Arg-201 and Gly-260. Asp-297 contacts FAD. An NAD(+)-binding site is contributed by 313–314 (EH). 313 to 314 (EH) contributes to the NADP(+) binding site. Val-315 is a binding site for FAD. An L-ascorbate-binding site is contributed by Arg-319. FAD is bound at residue Tyr-348. Residue Tyr-348 coordinates NAD(+). Tyr-348 contacts NADP(+). Arg-350 serves as a coordination point for L-ascorbate.

The protein belongs to the FAD-dependent oxidoreductase family. FAD serves as cofactor. Expressed in leaves, and to a lesser degree in stems, roots and all stages of fruit.

The protein resides in the cytoplasm. It carries out the reaction 2 monodehydro-L-ascorbate radical + NADH + H(+) = 2 L-ascorbate + NAD(+). Functionally, catalyzes the conversion of monodehydroascorbate to ascorbate, oxidizing NADH in the process. This chain is Monodehydroascorbate reductase, found in Solanum lycopersicum (Tomato).